The primary structure comprises 323 residues: CIMIP2 protein CG18335 (323 aa).

The protein belongs to the CIMIP2 family.

The protein localises to the cytoplasm. It localises to the cytoskeleton. It is found in the cilium axoneme. Its function is as follows. Probable microtubule inner protein (MIP) part of the dynein-decorated doublet microtubules (DMTs) in cilium axoneme. This chain is CIMIP2 protein CG18335, found in Drosophila melanogaster (Fruit fly).